The following is a 60-amino-acid chain: L-amino-acid oxidase (60 aa).

Position 1-4 (1-4 (GPMR)) interacts with FAD. R4 provides a ligand contact to substrate.

It belongs to the flavin monoamine oxidase family. FIG1 subfamily. As to quaternary structure, homodimer; non-covalently linked. FAD is required as a cofactor. In terms of processing, contains 2 disulfide bonds. N-glycosylated. As to expression, expressed by the venom gland.

It is found in the secreted. It catalyses the reaction an L-alpha-amino acid + O2 + H2O = a 2-oxocarboxylate + H2O2 + NH4(+). Catalyzes an oxidative deamination of predominantly hydrophobic and aromatic L-amino acids, thus producing hydrogen peroxide that may contribute to the diverse toxic effects of this enzyme. Exhibits diverse biological activities, such as hemorrhage, hemolysis, edema, apoptosis of vascular endothelial cells or tumor cell lines, antibacterial and antiparasitic activities, as well as regulation of platelet aggregation. Effects of snake L-amino oxidases on platelets are controversial, since they either induce aggregation or inhibit agonist-induced aggregation. These different effects are probably due to different experimental conditions. The protein is L-amino-acid oxidase of Bitis gabonica (Gaboon adder).